Here is a 139-residue protein sequence, read N- to C-terminus: Large ribosomal subunit protein bL17 (139 aa).

The protein belongs to the bacterial ribosomal protein bL17 family. In terms of assembly, part of the 50S ribosomal subunit. Contacts protein L32.

The sequence is that of Large ribosomal subunit protein bL17 from Cereibacter sphaeroides (strain ATCC 17029 / ATH 2.4.9) (Rhodobacter sphaeroides).